The chain runs to 582 residues: Cryptochrome DASH, chloroplastic/mitochondrial (582 aa).

The N-terminal 49 residues, 1 to 49, are a transit peptide targeting the chloroplast and mitochondrion; the sequence is MLHFLSSSSPLNPQFLLLPRQSARLRVLLSIPVSAMSSSSSSSSRGALA. Residues 84–234 enclose the Photolyase/cryptochrome alpha/beta domain; sequence GVAIVWFRND…KLQLIWGATL (151 aa). Positions 560 to 582 are disordered; that stretch reads GHQKRDQQFNRQRRPGHMYRRQK. Positions 570–582 are enriched in basic residues; the sequence is RQRRPGHMYRRQK.

This sequence belongs to the DNA photolyase class-1 family. It depends on FAD as a cofactor. Requires (6R)-5,10-methylene-5,6,7,8-tetrahydrofolate as cofactor.

It is found in the plastid. Its subcellular location is the chloroplast. The protein resides in the mitochondrion. Functionally, may have a photoreceptor function. Binds ss- and ds-DNA in a sequence non-specific manner, lacks photolyase activity. This Oryza sativa subsp. japonica (Rice) protein is Cryptochrome DASH, chloroplastic/mitochondrial (CRYD).